The sequence spans 81 residues: Cortexin-2 (81 aa).

The chain crosses the membrane as a helical span at residues 29-49 (TAFAFVGMLLVFLGLLIVRCF).

This sequence belongs to the cortexin family.

Its subcellular location is the membrane. The protein is Cortexin-2 (ctxn2) of Danio rerio (Zebrafish).